A 116-amino-acid chain; its full sequence is Large ribosomal subunit protein uL18 (116 aa).

It belongs to the universal ribosomal protein uL18 family. Part of the 50S ribosomal subunit; part of the 5S rRNA/L5/L18/L25 subcomplex. Contacts the 5S and 23S rRNAs.

Functionally, this is one of the proteins that bind and probably mediate the attachment of the 5S RNA into the large ribosomal subunit, where it forms part of the central protuberance. The protein is Large ribosomal subunit protein uL18 of Mycoplasma mycoides subsp. mycoides SC (strain CCUG 32753 / NCTC 10114 / PG1).